A 527-amino-acid polypeptide reads, in one-letter code: Transcription factor RBF1 (527 aa).

Disordered stretches follow at residues methionine 1–serine 36, alanine 258–glutamate 281, histidine 328–alanine 365, glutamine 395–aspartate 433, and threonine 470–leucine 527. A DNA-binding region spans residues histidine 160–histidine 300. Residues asparagine 263 to glutamate 281 show a composition bias toward basic and acidic residues. 2 stretches are compositionally biased toward low complexity: residues glutamine 332–alanine 365 and glutamine 395–threonine 428.

Belongs to the RBF1 family.

The protein localises to the nucleus. Its subcellular location is the chromosome. It is found in the telomere. Its function is as follows. Transcriptional activator that binds to the RPG box and to telomeres. Involved in the regulation of the transition between yeast and filamentous forms and plays a role in virulence. Induces expression of HWP1, a major hyphal cell protein and virulence factor. The protein is Transcription factor RBF1 (RBF1) of Candida albicans (Yeast).